The primary structure comprises 174 residues: Crossover junction endodeoxyribonuclease RuvC (174 aa).

Active-site residues include Asp-8, Glu-69, and Asp-141. Residues Asp-8, Glu-69, and Asp-141 each coordinate Mg(2+).

This sequence belongs to the RuvC family. In terms of assembly, homodimer which binds Holliday junction (HJ) DNA. The HJ becomes 2-fold symmetrical on binding to RuvC with unstacked arms; it has a different conformation from HJ DNA in complex with RuvA. In the full resolvosome a probable DNA-RuvA(4)-RuvB(12)-RuvC(2) complex forms which resolves the HJ. Mg(2+) serves as cofactor.

The protein resides in the cytoplasm. The catalysed reaction is Endonucleolytic cleavage at a junction such as a reciprocal single-stranded crossover between two homologous DNA duplexes (Holliday junction).. Functionally, the RuvA-RuvB-RuvC complex processes Holliday junction (HJ) DNA during genetic recombination and DNA repair. Endonuclease that resolves HJ intermediates. Cleaves cruciform DNA by making single-stranded nicks across the HJ at symmetrical positions within the homologous arms, yielding a 5'-phosphate and a 3'-hydroxyl group; requires a central core of homology in the junction. The consensus cleavage sequence is 5'-(A/T)TT(C/G)-3'. Cleavage occurs on the 3'-side of the TT dinucleotide at the point of strand exchange. HJ branch migration catalyzed by RuvA-RuvB allows RuvC to scan DNA until it finds its consensus sequence, where it cleaves and resolves the cruciform DNA. The sequence is that of Crossover junction endodeoxyribonuclease RuvC from Xanthomonas oryzae pv. oryzae (strain PXO99A).